The following is a 640-amino-acid chain: 1-deoxy-D-xylulose-5-phosphate synthase (640 aa).

Thiamine diphosphate-binding positions include H75 and 117–119 (GHA). D146 provides a ligand contact to Mg(2+). Residues 147–148 (AA), N175, and E370 contribute to the thiamine diphosphate site. N175 contacts Mg(2+).

Belongs to the transketolase family. DXPS subfamily. In terms of assembly, homodimer. Mg(2+) serves as cofactor. Thiamine diphosphate is required as a cofactor.

It carries out the reaction D-glyceraldehyde 3-phosphate + pyruvate + H(+) = 1-deoxy-D-xylulose 5-phosphate + CO2. Its pathway is metabolic intermediate biosynthesis; 1-deoxy-D-xylulose 5-phosphate biosynthesis; 1-deoxy-D-xylulose 5-phosphate from D-glyceraldehyde 3-phosphate and pyruvate: step 1/1. Its function is as follows. Catalyzes the acyloin condensation reaction between C atoms 2 and 3 of pyruvate and glyceraldehyde 3-phosphate to yield 1-deoxy-D-xylulose-5-phosphate (DXP). This chain is 1-deoxy-D-xylulose-5-phosphate synthase, found in Chlamydia trachomatis serovar L2 (strain ATCC VR-902B / DSM 19102 / 434/Bu).